Reading from the N-terminus, the 331-residue chain is Adenine deaminase (331 aa).

Zn(2+) is bound by residues His-17, His-19, and His-197. Glu-200 serves as the catalytic Proton donor. Asp-278 contributes to the Zn(2+) binding site. Asp-279 contributes to the substrate binding site.

It belongs to the metallo-dependent hydrolases superfamily. Adenosine and AMP deaminases family. Adenine deaminase type 2 subfamily. It depends on Zn(2+) as a cofactor.

The catalysed reaction is adenine + H2O + H(+) = hypoxanthine + NH4(+). Catalyzes the hydrolytic deamination of adenine to hypoxanthine. Plays an important role in the purine salvage pathway and in nitrogen catabolism. This chain is Adenine deaminase, found in Wolinella succinogenes (strain ATCC 29543 / DSM 1740 / CCUG 13145 / JCM 31913 / LMG 7466 / NCTC 11488 / FDC 602W) (Vibrio succinogenes).